A 267-amino-acid polypeptide reads, in one-letter code: Enolase-phosphatase E1 (267 aa).

Mg(2+)-binding residues include Asp-11 and Glu-13. Residues Ser-155 to Ser-156 and Lys-189 each bind substrate. Residue Asp-215 coordinates Mg(2+).

It belongs to the HAD-like hydrolase superfamily. MasA/MtnC family. As to quaternary structure, monomer. Requires Mg(2+) as cofactor.

Its subcellular location is the cytoplasm. It is found in the nucleus. The catalysed reaction is 5-methylsulfanyl-2,3-dioxopentyl phosphate + H2O = 1,2-dihydroxy-5-(methylsulfanyl)pent-1-en-3-one + phosphate. The protein operates within amino-acid biosynthesis; L-methionine biosynthesis via salvage pathway; L-methionine from S-methyl-5-thio-alpha-D-ribose 1-phosphate: step 3/6. It participates in amino-acid biosynthesis; L-methionine biosynthesis via salvage pathway; L-methionine from S-methyl-5-thio-alpha-D-ribose 1-phosphate: step 4/6. Bifunctional enzyme that catalyzes the enolization of 2,3-diketo-5-methylthiopentyl-1-phosphate (DK-MTP-1-P) into the intermediate 2-hydroxy-3-keto-5-methylthiopentenyl-1-phosphate (HK-MTPenyl-1-P), which is then dephosphorylated to form the acireductone 1,2-dihydroxy-3-keto-5-methylthiopentene (DHK-MTPene). This chain is Enolase-phosphatase E1 (enoph1), found in Dictyostelium discoideum (Social amoeba).